The sequence spans 123 residues: MSSKKIIGAFVLMTGILSGQVYAGVSEHFRNICNQTTADIVAGVQLKKYIADVNTNTRGIYVVSNTGGVWYIPGGRDYPDNFLSGEIRKTAMAAILSDTKVNLCAKTSSSPNHIWAMELDRES.

Positions 1 to 19 (MSSKKIIGAFVLMTGILSG) are cleaved as a signal peptide. Cysteines 33 and 104 form a disulfide.

In terms of assembly, heterohexamer of one A chain and of five B chains.

In terms of biological role, the biological activity of the toxin is produced by the A chain, which activates intracellular adenyl cyclase. In Escherichia coli, this protein is Heat-labile enterotoxin IIA, B chain.